We begin with the raw amino-acid sequence, 279 residues long: Dermonecrotic toxin LspiSicTox-betaIE3i (279 aa).

His5 is a catalytic residue. Mg(2+) is bound by residues Glu25 and Asp27. His41 functions as the Nucleophile in the catalytic mechanism. Disulfide bonds link Cys45–Cys51 and Cys47–Cys190. Mg(2+) is bound at residue Asp85.

It belongs to the arthropod phospholipase D family. Class II subfamily. Mg(2+) serves as cofactor. Expressed by the venom gland.

The protein resides in the secreted. It catalyses the reaction an N-(acyl)-sphingosylphosphocholine = an N-(acyl)-sphingosyl-1,3-cyclic phosphate + choline. The catalysed reaction is an N-(acyl)-sphingosylphosphoethanolamine = an N-(acyl)-sphingosyl-1,3-cyclic phosphate + ethanolamine. The enzyme catalyses a 1-acyl-sn-glycero-3-phosphocholine = a 1-acyl-sn-glycero-2,3-cyclic phosphate + choline. It carries out the reaction a 1-acyl-sn-glycero-3-phosphoethanolamine = a 1-acyl-sn-glycero-2,3-cyclic phosphate + ethanolamine. Functionally, dermonecrotic toxins cleave the phosphodiester linkage between the phosphate and headgroup of certain phospholipids (sphingolipid and lysolipid substrates), forming an alcohol (often choline) and a cyclic phosphate. This toxin acts on sphingomyelin (SM). It may also act on ceramide phosphoethanolamine (CPE), lysophosphatidylcholine (LPC) and lysophosphatidylethanolamine (LPE), but not on lysophosphatidylserine (LPS), and lysophosphatidylglycerol (LPG). It acts by transphosphatidylation, releasing exclusively cyclic phosphate products as second products. Induces dermonecrosis, hemolysis, increased vascular permeability, edema, inflammatory response, and platelet aggregation. This is Dermonecrotic toxin LspiSicTox-betaIE3i from Loxosceles spinulosa (Recluse spider).